A 393-amino-acid polypeptide reads, in one-letter code: MTVPSTRKDLMIVNMGPHHPSMHGVLRLIVTLDGEDVIDCEPILGYLHRGMEKIAENRTIIQYLPYVTRWDYLATMFTEAITVNAPEQLGNIQVPKRASYIRVIMLELSRIASHLLWLGPFMADIGAQTPFFYIFRERELIYDLFEAATGMRMMHNFFRIGGVAADLPHGWIDKCLDFCDYFLTGIAEYQKLITRNPIFLERVEGVGIIGGEEAINWGLSGPMLRASGIQWDLRKVDHYECYDEFDWEVQWQKEGDSLARYLVRISEMTESIKIIQQALEGIPGGPYENLEIRRFDRVKDTVWNEFDYRFISKKPSPTFELSKQELYARVEAPKGELGIFLIGDKGVFPWRYKIRPPGFINLQILPQLVKRMKLADIMTILGSIDIIMGEVDR.

It belongs to the complex I 49 kDa subunit family. In terms of assembly, NDH is composed of at least 16 different subunits, 5 of which are encoded in the nucleus.

The protein resides in the plastid. The protein localises to the chloroplast thylakoid membrane. It carries out the reaction a plastoquinone + NADH + (n+1) H(+)(in) = a plastoquinol + NAD(+) + n H(+)(out). The enzyme catalyses a plastoquinone + NADPH + (n+1) H(+)(in) = a plastoquinol + NADP(+) + n H(+)(out). In terms of biological role, NDH shuttles electrons from NAD(P)H:plastoquinone, via FMN and iron-sulfur (Fe-S) centers, to quinones in the photosynthetic chain and possibly in a chloroplast respiratory chain. The immediate electron acceptor for the enzyme in this species is believed to be plastoquinone. Couples the redox reaction to proton translocation, and thus conserves the redox energy in a proton gradient. In Guizotia abyssinica (Niger), this protein is NAD(P)H-quinone oxidoreductase subunit H, chloroplastic.